A 231-amino-acid polypeptide reads, in one-letter code: Endonuclease NucS (231 aa).

This sequence belongs to the NucS endonuclease family.

It is found in the cytoplasm. Cleaves both 3' and 5' ssDNA extremities of branched DNA structures. This is Endonuclease NucS from Beutenbergia cavernae (strain ATCC BAA-8 / DSM 12333 / CCUG 43141 / JCM 11478 / NBRC 16432 / NCIMB 13614 / HKI 0122).